Here is a 306-residue protein sequence, read N- to C-terminus: MQTPGLPEEKPAQGCPFGHGAVASSVATPAADSGDGWHDAQLDFSESMSYGDYLSLGTVLDAQHPLSPDHNEMLFIIQHQTSELWMKLALYELRAALQAVHRDELPPAFKMLARVSRIMEQLVQAWSVLATMTPSEYTAMRPYLGSSSGFQSYQYRQIEFLLGNKNEQMLKPHAHRADVLAEVKASLEAPSFYDEVVRLLARRGFAISAARLERDWTQPTVHDASVEAAWLEVYRNPSQHWELYEMAEELVDLEDAFRQWRFRHVTTVERIIGFKQGTGGTSGATYLRKMLDVVLFPELWHVRTML.

Substrate contacts are provided by residues phenylalanine 75–histidine 79, tyrosine 137, and arginine 141. Heme is bound at residue histidine 264. Threonine 278 contacts substrate.

It belongs to the tryptophan 2,3-dioxygenase family. As to quaternary structure, homotetramer. It depends on heme as a cofactor.

The enzyme catalyses L-tryptophan + O2 = N-formyl-L-kynurenine. The protein operates within amino-acid degradation; L-tryptophan degradation via kynurenine pathway; L-kynurenine from L-tryptophan: step 1/2. Heme-dependent dioxygenase that catalyzes the oxidative cleavage of the L-tryptophan (L-Trp) pyrrole ring and converts L-tryptophan to N-formyl-L-kynurenine. Catalyzes the oxidative cleavage of the indole moiety. This chain is Tryptophan 2,3-dioxygenase, found in Paraburkholderia phytofirmans (strain DSM 17436 / LMG 22146 / PsJN) (Burkholderia phytofirmans).